Reading from the N-terminus, the 409-residue chain is uncharacterized protein (409 aa).

Residue His46 participates in Zn(2+) binding. Catalysis depends on Glu49, which acts as the Proton acceptor. Residues His50 and Glu126 each coordinate Zn(2+).

It belongs to the peptidase M16 family. The cofactor is Zn(2+).

This is an uncharacterized protein from Bacillus subtilis (strain 168).